A 157-amino-acid polypeptide reads, in one-letter code: Transcriptional repressor NrdR (157 aa).

The tract at residues 1-24 (MRCPKCGGNKSSVVDSRQAEDGNT) is disordered. A zinc finger spans residues 3-34 (CPKCGGNKSSVVDSRQAEDGNTIRRRRECEEC). In terms of domain architecture, ATP-cone spans 49 to 139 (LVVVKKDGTR…VYRSFKDVGE (91 aa)).

Belongs to the NrdR family. It depends on Zn(2+) as a cofactor.

Its function is as follows. Negatively regulates transcription of bacterial ribonucleotide reductase nrd genes and operons by binding to NrdR-boxes. The polypeptide is Transcriptional repressor NrdR (Streptococcus sanguinis (strain SK36)).